A 780-amino-acid polypeptide reads, in one-letter code: ATP-dependent 6-phosphofructokinase, muscle type (780 aa).

Thr-2 bears the N-acetylthreonine mark. The tract at residues 2-390 (THEEHHATKT…NWEVYKLLAH (389 aa)) is N-terminal catalytic PFK domain 1. Residues Gly-25, 88 to 89 (RC), and 118 to 121 (GDGS) each bind ATP. Asp-119 serves as a coordination point for Mg(2+). The residue at position 133 (Ser-133) is a Phosphoserine. Substrate contacts are provided by residues 164–166 (SID), Arg-201, 208–210 (MGR), Glu-264, Arg-292, and 298–301 (HVQR). The active-site Proton acceptor is the Asp-166. A Phosphoserine modification is found at Ser-377. The tract at residues 391-401 (VRPPVSKSGSH) is interdomain linker. The tract at residues 402-780 (TVAVMNVGAP…TRKRSGEAAV (379 aa)) is C-terminal regulatory PFK domain 2. Beta-D-fructose 2,6-bisphosphate-binding positions include Arg-471 and 528 to 532 (TVSNN). Ser-530 is a glycosylation site (O-linked (GlcNAc) serine). Position 557 is an N6-(2-hydroxyisobutyryl)lysine (Lys-557). Beta-D-fructose 2,6-bisphosphate contacts are provided by residues Arg-566, 573–575 (MGG), Glu-629, Arg-655, and 661–664 (HMQQ). Phosphoserine is present on Ser-667. Residue Arg-735 coordinates beta-D-fructose 2,6-bisphosphate. Residue Ser-775 is modified to Phosphoserine.

The protein belongs to the phosphofructokinase type A (PFKA) family. ATP-dependent PFK group I subfamily. Eukaryotic two domain clade 'E' sub-subfamily. In terms of assembly, homo- and heterotetramers. Phosphofructokinase (PFK) enzyme functions as a tetramer composed of different combinations of 3 types of subunits, called PFKM (M), PFKL (L) and PFKP (P). The composition of the PFK tetramer differs according to the tissue type it is present in. The kinetic and regulatory properties of the tetrameric enzyme are dependent on the subunit composition, hence can vary across tissues. Interacts (via C-terminus) with HK1 (via N-terminal spermatogenic cell-specific region). Requires Mg(2+) as cofactor. Post-translationally, glcNAcylation decreases enzyme activity.

It is found in the cytoplasm. It catalyses the reaction beta-D-fructose 6-phosphate + ATP = beta-D-fructose 1,6-bisphosphate + ADP + H(+). It functions in the pathway carbohydrate degradation; glycolysis; D-glyceraldehyde 3-phosphate and glycerone phosphate from D-glucose: step 3/4. Allosterically activated by ADP, AMP, or fructose 2,6-bisphosphate, and allosterically inhibited by ATP or citrate. Its function is as follows. Catalyzes the phosphorylation of D-fructose 6-phosphate to fructose 1,6-bisphosphate by ATP, the first committing step of glycolysis. This is ATP-dependent 6-phosphofructokinase, muscle type (PFKM) from Pongo abelii (Sumatran orangutan).